Consider the following 356-residue polypeptide: Peptide chain release factor 1 (356 aa).

Q233 is modified (N5-methylglutamine).

This sequence belongs to the prokaryotic/mitochondrial release factor family. In terms of processing, methylated by PrmC. Methylation increases the termination efficiency of RF1.

The protein localises to the cytoplasm. Its function is as follows. Peptide chain release factor 1 directs the termination of translation in response to the peptide chain termination codons UAG and UAA. The protein is Peptide chain release factor 1 of Syntrophotalea carbinolica (strain DSM 2380 / NBRC 103641 / GraBd1) (Pelobacter carbinolicus).